The chain runs to 493 residues: Glutamyl-tRNA(Gln) amidotransferase subunit A (493 aa).

Residues Lys-78 and Ser-158 each act as charge relay system in the active site. Ser-182 functions as the Acyl-ester intermediate in the catalytic mechanism.

The protein belongs to the amidase family. GatA subfamily. Heterotrimer of A, B and C subunits.

The catalysed reaction is L-glutamyl-tRNA(Gln) + L-glutamine + ATP + H2O = L-glutaminyl-tRNA(Gln) + L-glutamate + ADP + phosphate + H(+). Functionally, allows the formation of correctly charged Gln-tRNA(Gln) through the transamidation of misacylated Glu-tRNA(Gln) in organisms which lack glutaminyl-tRNA synthetase. The reaction takes place in the presence of glutamine and ATP through an activated gamma-phospho-Glu-tRNA(Gln). The sequence is that of Glutamyl-tRNA(Gln) amidotransferase subunit A from Rickettsia conorii (strain ATCC VR-613 / Malish 7).